A 466-amino-acid polypeptide reads, in one-letter code: MQKSYDYDAIVIGSGPGGEGAAMGLVKQGARIAVIERYHNIGGGCTHWGTIPSKALRHAVSRIIEFNQNPLYSDHTRLLRSSFADILNHTENVVSQQTHMRQGFYERNHCEIFQGDARFIDANTLEIETHDGSIERLTAEKFVIACGSRPYHPPDVDFTHPRIYDSDSILNLHHEPGHVIIYGAGVIGCEYASIFRGLAVKVDLINTRDRLLAFLDQEMSDSLSYHFWNNGVVIRHNEEFEKVEGVADGVIMHLKSGKKLKADCLLYANGRTGNTDSLSLENVGLEADGRGLLKVNSMYQTAQPNIYAVGDVIGYPSLASAAYDQGRIAAQAMIKGEATAHLIEDIPTGIYTIPEISSVGKTEQQLTAMKVPYEVGRAQFKHLARAQIVGMNVGSLKILFHRETKEILGIHCFGERAAEIIHIGQAIMEQKNGGNTIEYFVNTTFNYPTMAEAYRVAALNGLNRLF.

An FAD-binding site is contributed by 36-45 (ERYHNIGGGC).

It belongs to the class-I pyridine nucleotide-disulfide oxidoreductase family. FAD serves as cofactor.

The protein localises to the cytoplasm. It carries out the reaction NAD(+) + NADPH = NADH + NADP(+). Functionally, conversion of NADPH, generated by peripheral catabolic pathways, to NADH, which can enter the respiratory chain for energy generation. This chain is Soluble pyridine nucleotide transhydrogenase, found in Erwinia tasmaniensis (strain DSM 17950 / CFBP 7177 / CIP 109463 / NCPPB 4357 / Et1/99).